The chain runs to 213 residues: Thiamine-phosphate synthase (213 aa).

4-amino-2-methyl-5-(diphosphooxymethyl)pyrimidine is bound by residues glutamine 43–lysine 47 and asparagine 74. Mg(2+) is bound by residues aspartate 75 and aspartate 94. Serine 113 contributes to the 4-amino-2-methyl-5-(diphosphooxymethyl)pyrimidine binding site. A 2-[(2R,5Z)-2-carboxy-4-methylthiazol-5(2H)-ylidene]ethyl phosphate-binding site is contributed by threonine 142–threonine 144. Lysine 145 contacts 4-amino-2-methyl-5-(diphosphooxymethyl)pyrimidine. 2-[(2R,5Z)-2-carboxy-4-methylthiazol-5(2H)-ylidene]ethyl phosphate-binding positions include glycine 173 and valine 193 to serine 194.

This sequence belongs to the thiamine-phosphate synthase family. It depends on Mg(2+) as a cofactor.

It catalyses the reaction 2-[(2R,5Z)-2-carboxy-4-methylthiazol-5(2H)-ylidene]ethyl phosphate + 4-amino-2-methyl-5-(diphosphooxymethyl)pyrimidine + 2 H(+) = thiamine phosphate + CO2 + diphosphate. The enzyme catalyses 2-(2-carboxy-4-methylthiazol-5-yl)ethyl phosphate + 4-amino-2-methyl-5-(diphosphooxymethyl)pyrimidine + 2 H(+) = thiamine phosphate + CO2 + diphosphate. It carries out the reaction 4-methyl-5-(2-phosphooxyethyl)-thiazole + 4-amino-2-methyl-5-(diphosphooxymethyl)pyrimidine + H(+) = thiamine phosphate + diphosphate. Its pathway is cofactor biosynthesis; thiamine diphosphate biosynthesis; thiamine phosphate from 4-amino-2-methyl-5-diphosphomethylpyrimidine and 4-methyl-5-(2-phosphoethyl)-thiazole: step 1/1. In terms of biological role, condenses 4-methyl-5-(beta-hydroxyethyl)thiazole monophosphate (THZ-P) and 2-methyl-4-amino-5-hydroxymethyl pyrimidine pyrophosphate (HMP-PP) to form thiamine monophosphate (TMP). This chain is Thiamine-phosphate synthase, found in Psychrobacter sp. (strain PRwf-1).